The following is a 132-amino-acid chain: Secreted RxLR effector protein BLR08 (132 aa).

Residues 1-22 (MRHKCLLAMAVVASMAFYSVIS) form the signal peptide. Residue N25 is glycosylated (N-linked (GlcNAc...) asparagine). The tract at residues 36–57 (NRRLRPRVEPTANELDKQSDVD) is disordered. Positions 37-83 (RRLRPRVEPTANELDKQSDVDTKLEADRRLGYPGESGFMLEGELEER) match the RxLR-dEER motif. Residues 111–131 (FFLGLFASVIGVSIISACYGI) traverse the membrane as a helical segment.

This sequence belongs to the RxLR effector family. In terms of assembly, interacts with host transcription factor NAC069.

It localises to the secreted. It is found in the host endoplasmic reticulum membrane. Its function is as follows. Secreted effector that inhibits stress-induced relocalization of the transcription factor NAC069 to the nucleus, thus affecting its broad role in abiotic and biotic stress responses. This is Secreted RxLR effector protein BLR08 from Bremia lactucae (Lettuce downy mildew).